The sequence spans 275 residues: Large ribosomal subunit protein uL2 (275 aa).

2 disordered regions span residues 35 to 55 and 223 to 260; these read EKQTRSSGRNNQGRVTTRHKG and VAMNPVDHPHGGGEGRTSGGRHPVSPWGIPTKGYKTRN. Residues 39-49 are compositionally biased toward polar residues; it reads RSSGRNNQGRV.

The protein belongs to the universal ribosomal protein uL2 family. In terms of assembly, part of the 50S ribosomal subunit. Forms a bridge to the 30S subunit in the 70S ribosome.

In terms of biological role, one of the primary rRNA binding proteins. Required for association of the 30S and 50S subunits to form the 70S ribosome, for tRNA binding and peptide bond formation. It has been suggested to have peptidyltransferase activity; this is somewhat controversial. Makes several contacts with the 16S rRNA in the 70S ribosome. This is Large ribosomal subunit protein uL2 from Methylococcus capsulatus (strain ATCC 33009 / NCIMB 11132 / Bath).